Consider the following 389-residue polypeptide: Chalcone synthase (389 aa).

The active site involves cysteine 164.

It belongs to the thiolase-like superfamily. Chalcone/stilbene synthases family.

It catalyses the reaction (E)-4-coumaroyl-CoA + 3 malonyl-CoA + 3 H(+) = 2',4,4',6'-tetrahydroxychalcone + 3 CO2 + 4 CoA. The protein operates within secondary metabolite biosynthesis; flavonoid biosynthesis. In terms of biological role, the primary product of this enzyme is 4,2',4',6'-tetrahydroxychalcone (also termed naringenin-chalcone or chalcone) which can under specific conditions spontaneously isomerize into naringenin. This Catharanthus roseus (Madagascar periwinkle) protein is Chalcone synthase (CHS).